A 481-amino-acid chain; its full sequence is Pyruvate kinase (481 aa).

R33 lines the substrate pocket. Residues N35, S37, D67, and T68 each coordinate K(+). 35-38 (NFSH) provides a ligand contact to ATP. R74 and K155 together coordinate ATP. Position 221 (E221) interacts with Mg(2+). G244, D245, and T277 together coordinate substrate. Position 245 (D245) interacts with Mg(2+).

Belongs to the pyruvate kinase family. As to quaternary structure, homotetramer. Requires Mg(2+) as cofactor. K(+) serves as cofactor.

The catalysed reaction is pyruvate + ATP = phosphoenolpyruvate + ADP + H(+). It functions in the pathway carbohydrate degradation; glycolysis; pyruvate from D-glyceraldehyde 3-phosphate: step 5/5. In Chlamydia muridarum (strain MoPn / Nigg), this protein is Pyruvate kinase (pyk).